The chain runs to 214 residues: Transmembrane emp24 domain-containing protein p24delta10 (214 aa).

Positions 1–24 (MFLQSQKLWTMLLILAIWSPISHS) are cleaved as a signal peptide. Residues 25–181 (LHFDLHSGRT…QDLNRSTNTK (157 aa)) are Lumenal-facing. The GOLD domain maps to 34-149 (TKCIAEDIKS…VEVMEFEVKS (116 aa)). The stretch at 164-177 (LRDREEEMQDLNRS) forms a coiled coil. An Omega-N-methylated arginine modification is found at arginine 167. Asparagine 175 carries an N-linked (GlcNAc...) asparagine glycan. The chain crosses the membrane as a helical span at residues 182 to 202 (MAWLSVLSFFVCIGVAGMQFL). Residues 203-214 (HLKTFFEKKKVI) are Cytoplasmic-facing. The COPII vesicle coat-binding signature appears at 207–208 (FF). A COPI vesicle coat-binding motif is present at residues 207–214 (FFEKKKVI).

This sequence belongs to the EMP24/GP25L family. Probably oligomerizes with other members of the EMP24/GP25L family. Associates with the COPI vesicle coat (coatomer). Associates with the COPII vesicle coat (coatomer).

The protein localises to the endoplasmic reticulum membrane. It is found in the golgi apparatus. Its subcellular location is the cis-Golgi network membrane. It localises to the golgi stack membrane. Involved in vesicular protein trafficking. Mainly functions in the early secretory pathway. Thought to act as cargo receptor at the lumenal side for incorporation of secretory cargo molecules into transport vesicles and to be involved in vesicle coat formation at the cytoplasmic side. This Arabidopsis thaliana (Mouse-ear cress) protein is Transmembrane emp24 domain-containing protein p24delta10.